Reading from the N-terminus, the 347-residue chain is Probable dual-specificity RNA methyltransferase RlmN (347 aa).

Catalysis depends on E91, which acts as the Proton acceptor. Residues 97-327 (YKYGNSICVS…ATVRREMGSD (231 aa)) enclose the Radical SAM core domain. C104 and C332 form a disulfide bridge. 3 residues coordinate [4Fe-4S] cluster: C111, C115, and C118. S-adenosyl-L-methionine is bound by residues 158 to 159 (GE), S190, 213 to 215 (SLH), and N289. Catalysis depends on C332, which acts as the S-methylcysteine intermediate.

Belongs to the radical SAM superfamily. RlmN family. [4Fe-4S] cluster is required as a cofactor.

It is found in the cytoplasm. The catalysed reaction is adenosine(2503) in 23S rRNA + 2 reduced [2Fe-2S]-[ferredoxin] + 2 S-adenosyl-L-methionine = 2-methyladenosine(2503) in 23S rRNA + 5'-deoxyadenosine + L-methionine + 2 oxidized [2Fe-2S]-[ferredoxin] + S-adenosyl-L-homocysteine. It catalyses the reaction adenosine(37) in tRNA + 2 reduced [2Fe-2S]-[ferredoxin] + 2 S-adenosyl-L-methionine = 2-methyladenosine(37) in tRNA + 5'-deoxyadenosine + L-methionine + 2 oxidized [2Fe-2S]-[ferredoxin] + S-adenosyl-L-homocysteine. Specifically methylates position 2 of adenine 2503 in 23S rRNA and position 2 of adenine 37 in tRNAs. The polypeptide is Probable dual-specificity RNA methyltransferase RlmN (Clostridium perfringens (strain SM101 / Type A)).